The chain runs to 156 residues: Small ribosomal subunit protein uS7 (156 aa).

This sequence belongs to the universal ribosomal protein uS7 family. As to quaternary structure, part of the 30S ribosomal subunit. Contacts proteins S9 and S11.

Its function is as follows. One of the primary rRNA binding proteins, it binds directly to 16S rRNA where it nucleates assembly of the head domain of the 30S subunit. Is located at the subunit interface close to the decoding center, probably blocks exit of the E-site tRNA. The protein is Small ribosomal subunit protein uS7 of Mesorhizobium japonicum (strain LMG 29417 / CECT 9101 / MAFF 303099) (Mesorhizobium loti (strain MAFF 303099)).